The sequence spans 158 residues: NAD(P)H-quinone oxidoreductase subunit J, chloroplastic (158 aa).

Belongs to the complex I 30 kDa subunit family. As to quaternary structure, NDH is composed of at least 16 different subunits, 5 of which are encoded in the nucleus.

It localises to the plastid. It is found in the chloroplast thylakoid membrane. The catalysed reaction is a plastoquinone + NADH + (n+1) H(+)(in) = a plastoquinol + NAD(+) + n H(+)(out). It carries out the reaction a plastoquinone + NADPH + (n+1) H(+)(in) = a plastoquinol + NADP(+) + n H(+)(out). Its function is as follows. NDH shuttles electrons from NAD(P)H:plastoquinone, via FMN and iron-sulfur (Fe-S) centers, to quinones in the photosynthetic chain and possibly in a chloroplast respiratory chain. The immediate electron acceptor for the enzyme in this species is believed to be plastoquinone. Couples the redox reaction to proton translocation, and thus conserves the redox energy in a proton gradient. This is NAD(P)H-quinone oxidoreductase subunit J, chloroplastic from Amborella trichopoda.